The primary structure comprises 599 residues: Elongation factor 4 (599 aa).

One can recognise a tr-type G domain in the interval 2-184; sequence KNIRNFSIIA…RLVRDIPPPE (183 aa). GTP contacts are provided by residues 14-19 and 131-134; these read DHGKST and NKID.

Belongs to the TRAFAC class translation factor GTPase superfamily. Classic translation factor GTPase family. LepA subfamily.

It localises to the cell inner membrane. The enzyme catalyses GTP + H2O = GDP + phosphate + H(+). In terms of biological role, required for accurate and efficient protein synthesis under certain stress conditions. May act as a fidelity factor of the translation reaction, by catalyzing a one-codon backward translocation of tRNAs on improperly translocated ribosomes. Back-translocation proceeds from a post-translocation (POST) complex to a pre-translocation (PRE) complex, thus giving elongation factor G a second chance to translocate the tRNAs correctly. Binds to ribosomes in a GTP-dependent manner. The protein is Elongation factor 4 of Shigella dysenteriae serotype 1 (strain Sd197).